We begin with the raw amino-acid sequence, 269 residues long: Formamidopyrimidine-DNA glycosylase (269 aa).

Proline 2 acts as the Schiff-base intermediate with DNA in catalysis. The Proton donor role is filled by glutamate 3. Lysine 57 acts as the Proton donor; for beta-elimination activity in catalysis. 3 residues coordinate DNA: histidine 90, arginine 109, and lysine 150. Residues 235–269 form an FPG-type zinc finger; sequence QVYGRKGEPCRVCGTPIVATKHAQRATFYCRQCQK. Arginine 259 (proton donor; for delta-elimination activity) is an active-site residue.

The protein belongs to the FPG family. Monomer. Zn(2+) is required as a cofactor.

It carries out the reaction Hydrolysis of DNA containing ring-opened 7-methylguanine residues, releasing 2,6-diamino-4-hydroxy-5-(N-methyl)formamidopyrimidine.. The enzyme catalyses 2'-deoxyribonucleotide-(2'-deoxyribose 5'-phosphate)-2'-deoxyribonucleotide-DNA = a 3'-end 2'-deoxyribonucleotide-(2,3-dehydro-2,3-deoxyribose 5'-phosphate)-DNA + a 5'-end 5'-phospho-2'-deoxyribonucleoside-DNA + H(+). Involved in base excision repair of DNA damaged by oxidation or by mutagenic agents. Acts as a DNA glycosylase that recognizes and removes damaged bases. Has a preference for oxidized purines, such as 7,8-dihydro-8-oxoguanine (8-oxoG). Has AP (apurinic/apyrimidinic) lyase activity and introduces nicks in the DNA strand. Cleaves the DNA backbone by beta-delta elimination to generate a single-strand break at the site of the removed base with both 3'- and 5'-phosphates. The sequence is that of Formamidopyrimidine-DNA glycosylase from Escherichia coli (strain K12 / MC4100 / BW2952).